The sequence spans 224 residues: Urease accessory protein UreF 2 (224 aa).

The protein belongs to the UreF family. As to quaternary structure, ureD, UreF and UreG form a complex that acts as a GTP-hydrolysis-dependent molecular chaperone, activating the urease apoprotein by helping to assemble the nickel containing metallocenter of UreC. The UreE protein probably delivers the nickel.

The protein localises to the cytoplasm. Its function is as follows. Required for maturation of urease via the functional incorporation of the urease nickel metallocenter. This Pseudomonas syringae pv. tomato (strain ATCC BAA-871 / DC3000) protein is Urease accessory protein UreF 2.